The sequence spans 142 residues: Large ribosomal subunit protein uL11 (142 aa).

The protein belongs to the universal ribosomal protein uL11 family. As to quaternary structure, part of the ribosomal stalk of the 50S ribosomal subunit. Interacts with L10 and the large rRNA to form the base of the stalk. L10 forms an elongated spine to which L12 dimers bind in a sequential fashion forming a multimeric L10(L12)X complex. One or more lysine residues are methylated.

In terms of biological role, forms part of the ribosomal stalk which helps the ribosome interact with GTP-bound translation factors. The chain is Large ribosomal subunit protein uL11 from Haemophilus influenzae (strain PittGG).